Here is an 89-residue protein sequence, read N- to C-terminus: Co-chaperonin GroES (89 aa).

It belongs to the GroES chaperonin family. In terms of assembly, heptamer of 7 subunits arranged in a ring. Interacts with the chaperonin GroEL.

Its subcellular location is the cytoplasm. Functionally, together with the chaperonin GroEL, plays an essential role in assisting protein folding. The GroEL-GroES system forms a nano-cage that allows encapsulation of the non-native substrate proteins and provides a physical environment optimized to promote and accelerate protein folding. GroES binds to the apical surface of the GroEL ring, thereby capping the opening of the GroEL channel. The sequence is that of Co-chaperonin GroES from Petrotoga mobilis (strain DSM 10674 / SJ95).